The following is a 213-amino-acid chain: 3,4-dihydroxy-2-butanone 4-phosphate synthase (213 aa).

D-ribulose 5-phosphate contacts are provided by residues 37–38 (RE), Asp-42, 150–154 (RPGHT), and Glu-174. Glu-38 provides a ligand contact to Mg(2+). His-153 is a binding site for Mg(2+).

Belongs to the DHBP synthase family. As to quaternary structure, homodimer. The cofactor is Mg(2+). Mn(2+) serves as cofactor.

The catalysed reaction is D-ribulose 5-phosphate = (2S)-2-hydroxy-3-oxobutyl phosphate + formate + H(+). It participates in cofactor biosynthesis; riboflavin biosynthesis; 2-hydroxy-3-oxobutyl phosphate from D-ribulose 5-phosphate: step 1/1. Its function is as follows. Catalyzes the conversion of D-ribulose 5-phosphate to formate and 3,4-dihydroxy-2-butanone 4-phosphate. The sequence is that of 3,4-dihydroxy-2-butanone 4-phosphate synthase from Clostridium botulinum (strain ATCC 19397 / Type A).